Consider the following 363-residue polypeptide: Dual-specificity RNA methyltransferase RlmN (363 aa).

The active-site Proton acceptor is the Glu-102. The Radical SAM core domain occupies 108–349 (EKKRATLCVS…KNRGQDIGAA (242 aa)). Cysteines 115 and 350 form a disulfide. Residues Cys-122, Cys-126, and Cys-129 each coordinate [4Fe-4S] cluster. Residues 174 to 175 (GE), Ser-206, 228 to 230 (SLH), and Asn-307 each bind S-adenosyl-L-methionine. The S-methylcysteine intermediate role is filled by Cys-350.

Belongs to the radical SAM superfamily. RlmN family. [4Fe-4S] cluster is required as a cofactor.

Its subcellular location is the cytoplasm. It carries out the reaction adenosine(2503) in 23S rRNA + 2 reduced [2Fe-2S]-[ferredoxin] + 2 S-adenosyl-L-methionine = 2-methyladenosine(2503) in 23S rRNA + 5'-deoxyadenosine + L-methionine + 2 oxidized [2Fe-2S]-[ferredoxin] + S-adenosyl-L-homocysteine. The catalysed reaction is adenosine(37) in tRNA + 2 reduced [2Fe-2S]-[ferredoxin] + 2 S-adenosyl-L-methionine = 2-methyladenosine(37) in tRNA + 5'-deoxyadenosine + L-methionine + 2 oxidized [2Fe-2S]-[ferredoxin] + S-adenosyl-L-homocysteine. Its function is as follows. Specifically methylates position 2 of adenine 2503 in 23S rRNA and position 2 of adenine 37 in tRNAs. m2A2503 modification seems to play a crucial role in the proofreading step occurring at the peptidyl transferase center and thus would serve to optimize ribosomal fidelity. In Buchnera aphidicola subsp. Schizaphis graminum (strain Sg), this protein is Dual-specificity RNA methyltransferase RlmN.